Consider the following 480-residue polypeptide: Outer capsid protein VP5 (480 aa).

The tract at residues 1-48 (MTSKRLGARFPGFLNRIGSGITRAARSDTTKRIPSAAGRAVERVAASE) is involved in membrane permeabilization.

It belongs to the orbivirus VP5 family.

The protein localises to the virion. In terms of biological role, VP5 protein is one of the two proteins (with VP2) which constitute the virus particle outer capsid. Acts as a membrane permeabilization protein that mediates release of viral particles from endosomal compartments into the cytoplasm. Permeabilization activity is probably negatively regulated by VP2 and is triggered by endosomal degradation of VP2 and exposure to low pH. The protein is Outer capsid protein VP5 (Segment-6) of Ixodes (gulls).